Consider the following 457-residue polypeptide: Ribosomal RNA-processing protein 8 (457 aa).

Residues 47 to 237 form a disordered region; sequence LEAASLSQQT…KSDSQESRAG (191 aa). Polar residues predominate over residues 51–61; it reads SLSQQTPSLPG. Ser-62, Ser-64, and Ser-105 each carry phosphoserine. Positions 129 to 138 are enriched in basic and acidic residues; sequence GEEKGKRKCQ. Residues 139 to 183 show a composition bias toward polar residues; the sequence is EYSSLHLTQPLDSVDQTVHNSRTSTATIDPSKPSPESMSPNSSHT. A phosphoserine mark is found at Ser-172 and Ser-177. A compositionally biased stretch (basic residues) spans 184–203; it reads LSRKQWRNRQKNKRRHKNKF. Residues His-282, Gly-317, Asp-335, Asp-347, Met-348, and Cys-364 each contribute to the S-adenosyl-L-methionine site.

Belongs to the methyltransferase superfamily. RRP8 family. In terms of assembly, component of the eNoSC complex, composed of SIRT1, SUV39H1 and RRP8.

The protein localises to the nucleus. It is found in the nucleolus. Essential component of the eNoSC (energy-dependent nucleolar silencing) complex, a complex that mediates silencing of rDNA in response to intracellular energy status and acts by recruiting histone-modifying enzymes. The eNoSC complex is able to sense the energy status of cell: upon glucose starvation, elevation of NAD(+)/NADP(+) ratio activates SIRT1, leading to histone H3 deacetylation followed by dimethylation of H3 at 'Lys-9' (H3K9me2) by SUV39H1 and the formation of silent chromatin in the rDNA locus. In the complex, RRP8 binds to H3K9me2 and probably acts as a methyltransferase. Its substrates are however unknown. The protein is Ribosomal RNA-processing protein 8 (Rrp8) of Mus musculus (Mouse).